Consider the following 787-residue polypeptide: Integrin beta-3 (787 aa).

Positions 1–25 (MRAQWPGQLWAALLALGALAGVVVG) are cleaved as a signal peptide. Over 26–717 (ESNICTTRGV…EEPECPKGPD (692 aa)) the chain is Extracellular. The PSI domain maps to 29 to 75 (ICTTRGVNSCQQCLAVSPVCAWCSDETLSQGSPRCNLKENLLKDNCA). 19 disulfides stabilise this stretch: cysteine 30/cysteine 48, cysteine 38/cysteine 460, cysteine 41/cysteine 63, cysteine 51/cysteine 74, cysteine 202/cysteine 209, cysteine 257/cysteine 298, cysteine 399/cysteine 411, cysteine 431/cysteine 458, cysteine 462/cysteine 482, cysteine 473/cysteine 485, cysteine 487/cysteine 496, cysteine 498/cysteine 528, cysteine 511/cysteine 526, cysteine 520/cysteine 531, cysteine 533/cysteine 546, cysteine 548/cysteine 569, cysteine 553/cysteine 567, cysteine 561/cysteine 572, and cysteine 574/cysteine 583. Residues 134–376 (DYPVDIYYLM…QLIVDAYGKI (243 aa)) form the VWFA domain. Mg(2+) is bound by residues serine 146 and serine 148. Serine 148, aspartate 151, aspartate 152, and aspartate 183 together coordinate Ca(2+). Positions 202-209 (CYNMKNAC) are CX3CL1-binding. Residues 202-209 (CYNMKNAC) are involved in CX3CL1-, NRG1-, FGF1- and IGF1-binding. Residues asparagine 240, aspartate 242, proline 244, glutamate 245, and aspartate 276 each contribute to the Ca(2+) site. Glutamate 245 contacts Mg(2+). Positions 292 to 312 (LPNDGHCHIGTDNHYSASTTM) are CX3CL1-binding. 2 N-linked (GlcNAc...) asparagine glycosylation sites follow: asparagine 345 and asparagine 396. I-EGF domains lie at 462 to 497 (CQAFAQPSSPRCNNGNGTFECGVCRCDQGWLGSMCE), 498 to 547 (CSEE…KYCE), 548 to 584 (CDDFSCVRYKGEMCSGHGQCNCGDCVCDSDWTGYYCN), and 585 to 624 (CTTRTDTCMSTNGLLCSGRGNCECGSCVCVQPGSYGDTCE). Asparagine 477 carries N-linked (GlcNAc...) asparagine glycosylation. Asparagine 584 carries an N-linked (GlcNAc...) asparagine glycan. Intrachain disulfides connect cysteine 585–cysteine 608, cysteine 592–cysteine 606, cysteine 600–cysteine 611, cysteine 613–cysteine 623, cysteine 626–cysteine 629, cysteine 633–cysteine 680, cysteine 639–cysteine 660, cysteine 642–cysteine 656, and cysteine 688–cysteine 712. N-linked (GlcNAc...) asparagine glycosylation occurs at asparagine 679. The chain crosses the membrane as a helical span at residues 718-740 (ILVVLLSVMGAILLIGLATLLIW). At 741–787 (KLLITIHDRKEFAKFEEERARAKWDTANNPLYKEATSTFTNITYRGT) the chain is on the cytoplasmic side. The residue at position 766 (threonine 766) is a Phosphothreonine. Tyrosine 772 carries the post-translational modification Phosphotyrosine. Residues 776 to 782 (TSTFTNI) carry the LIR motif. Phosphothreonine is present on threonine 778. Position 784 is a phosphotyrosine (tyrosine 784).

This sequence belongs to the integrin beta chain family. In terms of assembly, heterodimer of an alpha and a beta subunit. Beta-3 (ITGB3) associates with either alpha-IIB (ITGA2B) or alpha-V (ITGAV). Interacts with FLNB and COMP. Interacts with PDIA6 following platelet stimulation. Interacts with SYK; upon activation by ITGB3 promotes platelet adhesion. Interacts with MYO10. Interacts with DAB2. Interacts with FERMT2. Integrin ITGAV:ITGB3 interacts with FBLN5 (via N-terminus). Interacts with EMP2; regulates the levels of the heterodimer ITGA5:ITGB3 integrin expression on the plasma membrane. ITGAV:ITGB3 interacts with CCN3. ITGAV:ITGB3 and ITGA2B:ITGB3 interact with SELP (via C-type lectin domain); the interaction mediates cell-cell interaction and adhesion. ITGAV:ITGB3 interacts with AGRA2. ITGAV:ITGB3 is found in a ternary complex with CX3CR1 and CX3CL1. ITGAV:ITGB3 is found in a ternary complex with NRG1 and ERBB3. ITGAV:ITGB3 is found in a ternary complex with FGF1 and FGFR1. ITGAV:ITGB3 interacts with FGF2; it is likely that FGF2 can simultaneously bind ITGAV:ITGB3 and FGF receptors. ITGAV:ITGB3 binds to IL1B. ITGAV:ITGB3 is found in a ternary complex with IGF1 and IGF1R. ITGAV:ITGB3 interacts with IGF2. ITGAV:ITGB3 interacts with FBN1. ITGAV:ITGB3 interacts with CD9, CD81 and CD151 (via second extracellular domain). Interacts (via the allosteric site (site 2)) with CXCL12 in a CXCR4-independent manner. Interacts with MXRA8/DICAM; the interaction inhibits ITGAV:ITGB3 heterodimer formation. ITGAV:ITGB3 interacts with PTN. Forms a complex with PTPRZ1 and PTN that stimulates endothelial cell migration through ITGB3 Tyr-772 phosphorylation. ITGAV:ITGB3 interacts with SLC6A4. Interacts with SLC6A4 (via C-terminus); this interaction regulates SLC6A4 trafficking. ITGA2B:ITGB3 interacts with PPIA/CYPA; the interaction is ROS and PPIase activity-dependent and is increased in the presence of thrombin. Interacts with tensin TNS3; TNS3 also interacts with PEAK1, thus acting as an adapter molecule to bridge the association of PEAK1 with ITGB3. Interacts with TM4SF19. In terms of processing, phosphorylated on tyrosine residues in response to thrombin-induced platelet aggregation. Probably involved in outside-in signaling.

It is found in the cell membrane. Its subcellular location is the cell projection. It localises to the lamellipodium membrane. The protein resides in the cell junction. The protein localises to the focal adhesion. It is found in the postsynaptic cell membrane. Its subcellular location is the synapse. Functionally, integrin alpha-V/beta-3 (ITGAV:ITGB3) is a receptor for cytotactin, fibronectin, laminin, matrix metalloproteinase-2, osteopontin, osteomodulin, prothrombin, thrombospondin, vitronectin and von Willebrand factor. Integrin alpha-IIB/beta-3 (ITGA2B:ITGB3) is a receptor for fibronectin, fibrinogen, plasminogen, prothrombin, thrombospondin and vitronectin. Integrins alpha-IIB/beta-3 and alpha-V/beta-3 recognize the sequence R-G-D in a wide array of ligands. Integrin alpha-IIB/beta-3 recognizes the sequence H-H-L-G-G-G-A-K-Q-A-G-D-V in fibrinogen gamma chain. Following activation integrin alpha-IIB/beta-3 brings about platelet/platelet interaction through binding of soluble fibrinogen. This step leads to rapid platelet aggregation which physically plugs ruptured endothelial surfaces. Fibrinogen binding enhances SELP expression in activated platelets. ITGAV:ITGB3 binds to fractalkine (CX3CL1) and acts as its coreceptor in CX3CR1-dependent fractalkine signaling. ITGAV:ITGB3 binds to NRG1 (via EGF domain) and this binding is essential for NRG1-ERBB signaling. ITGAV:ITGB3 binds to FGF1 and this binding is essential for FGF1 signaling. ITGAV:ITGB3 binds to FGF2 and this binding is essential for FGF2 signaling. ITGAV:ITGB3 binds to IGF1 and this binding is essential for IGF1 signaling. ITGAV:ITGB3 binds to IGF2 and this binding is essential for IGF2 signaling. ITGAV:ITGB3 binds to IL1B and this binding is essential for IL1B signaling. ITGAV:ITGB3 binds to PLA2G2A via a site (site 2) which is distinct from the classical ligand-binding site (site 1) and this induces integrin conformational changes and enhanced ligand binding to site 1. ITGAV:ITGB3 acts as a receptor for fibrillin-1 (FBN1) and mediates R-G-D-dependent cell adhesion to FBN1. ITGAV:ITGB3 binds to the Lilrb4a/Gp49b receptor and enhances the Lilrb4a-mediated inhibition of mast cell activation. ITGAV:ITGB3 also suppresses marginal zone B cell antibody production through its interaction with Lilrb4a. In brain, plays a role in synaptic transmission and plasticity. Involved in the regulation of the serotonin neurotransmission, is required to localize to specific compartments within the synapse the serotonin receptor SLC6A4 and for an appropriate reuptake of serotonin. Controls excitatory synaptic strength by regulating GRIA2-containing AMPAR endocytosis, which affects AMPAR abundance and composition. ITGAV:ITGB3 act as a receptor for CD40LG. ITGAV:ITGB3 acts as a receptor for IBSP and promotes cell adhesion and migration to IBSP. This Mus musculus (Mouse) protein is Integrin beta-3.